Reading from the N-terminus, the 284-residue chain is Bifunctional protein FolD (284 aa).

NADP(+) is bound by residues 165–167 (GRS), S190, and V231.

Belongs to the tetrahydrofolate dehydrogenase/cyclohydrolase family. In terms of assembly, homodimer.

It carries out the reaction (6R)-5,10-methylene-5,6,7,8-tetrahydrofolate + NADP(+) = (6R)-5,10-methenyltetrahydrofolate + NADPH. The catalysed reaction is (6R)-5,10-methenyltetrahydrofolate + H2O = (6R)-10-formyltetrahydrofolate + H(+). It functions in the pathway one-carbon metabolism; tetrahydrofolate interconversion. In terms of biological role, catalyzes the oxidation of 5,10-methylenetetrahydrofolate to 5,10-methenyltetrahydrofolate and then the hydrolysis of 5,10-methenyltetrahydrofolate to 10-formyltetrahydrofolate. The polypeptide is Bifunctional protein FolD (Geobacillus thermodenitrificans (strain NG80-2)).